Consider the following 305-residue polypeptide: Dihydroorotate dehydrogenase B (NAD(+)), catalytic subunit (305 aa).

FMN contacts are provided by residues Ser-23 and 47–48; that span reads KG. Substrate is bound by residues Lys-47 and 71-75; that span reads NAIGL. 2 residues coordinate FMN: Asn-101 and Asn-129. A substrate-binding site is contributed by Asn-129. Catalysis depends on Cys-132, which acts as the Nucleophile. FMN is bound by residues Lys-167 and Ile-193. 194–195 is a binding site for substrate; that stretch reads NT. FMN-binding positions include Gly-219, 245–246, and 267–268; these read GG and GT.

Belongs to the dihydroorotate dehydrogenase family. Type 1 subfamily. In terms of assembly, heterotetramer of 2 PyrK and 2 PyrD type B subunits. The cofactor is FMN.

Its subcellular location is the cytoplasm. It carries out the reaction (S)-dihydroorotate + NAD(+) = orotate + NADH + H(+). The protein operates within pyrimidine metabolism; UMP biosynthesis via de novo pathway; orotate from (S)-dihydroorotate (NAD(+) route): step 1/1. Catalyzes the conversion of dihydroorotate to orotate with NAD(+) as electron acceptor. The protein is Dihydroorotate dehydrogenase B (NAD(+)), catalytic subunit (pyrD) of Geobacter sulfurreducens (strain ATCC 51573 / DSM 12127 / PCA).